The following is a 1088-amino-acid chain: Adenylate-forming reductase Nps10 (1088 aa).

Residues 1-22 (MSSVSIQIPLPTPPPTQAHNSQ) are disordered. An adenylation (A) domain region spans residues 38–451 (FDWHSKNSPN…KIFGRTDDQI (414 aa)). AMP contacts are provided by residues His-261, 357–358 (NL), Thr-362, and 443–446 (IFGR). One can recognise a Carrier domain in the interval 586–668 (AWDSAKTLGF…SLASFVSSVA (83 aa)). Ser-621 is modified (O-(pantetheine 4'-phosphoryl)serine). A reductase (R) domain region spans residues 712–951 (LTGSTGALGS…IPVNVAAAAI (240 aa)). NADP(+) is bound by residues 716–719 (TGAL), 804–806 (NAW), Tyr-875, and Lys-879.

The protein belongs to the adenylate-forming reductase family.

In terms of biological role, adenylate-forming reductase, a natural product biosynthesis enzyme that resembles non-ribosomal peptide synthetases, yet serves to modify one substrate, rather than to condense two or more building blocks. The A-domain preferentially accepts phenylpyruvic acid and benzoic acid as substrate. The natural product of the enzyme is not yet known. This chain is Adenylate-forming reductase Nps10, found in Heterobasidion annosum (Root rot fungus).